We begin with the raw amino-acid sequence, 418 residues long: Nucleoredoxin (418 aa).

Residues 109-309 enclose the Thioredoxin domain; the sequence is KYKVTSIPSL…ESNAVQLHEG (201 aa).

This sequence belongs to the nucleoredoxin family.

It is found in the cytoplasm. It localises to the cytosol. Its subcellular location is the nucleus. It carries out the reaction [protein]-dithiol + NAD(+) = [protein]-disulfide + NADH + H(+). The enzyme catalyses [protein]-dithiol + NADP(+) = [protein]-disulfide + NADPH + H(+). In terms of biological role, functions as a redox-dependent negative regulator of the Wnt signaling pathway. This chain is Nucleoredoxin (nxn), found in Danio rerio (Zebrafish).